Here is a 224-residue protein sequence, read N- to C-terminus: UPF0758 protein Pmen_4376 (224 aa).

Positions Ala102–Met224 constitute an MPN domain. The Zn(2+) site is built by His173, His175, and Asp186. Positions His173–Asp186 match the JAMM motif motif.

Belongs to the UPF0758 family.

The chain is UPF0758 protein Pmen_4376 from Ectopseudomonas mendocina (strain ymp) (Pseudomonas mendocina).